Consider the following 147-residue polypeptide: uncharacterized protein (147 aa).

A helical membrane pass occupies residues 69–89 (IFFFLSLYLSSIKIPMLILNI).

The protein localises to the membrane. This is an uncharacterized protein from Saccharomyces cerevisiae (strain ATCC 204508 / S288c) (Baker's yeast).